The primary structure comprises 760 residues: H(+)/Cl(-) exchange transporter 4 (760 aa).

Over 1-67 (MVNAGAMSGS…WEFIKSLLDA (67 aa)) the chain is Cytoplasmic. A required for localization in the endoplasmic reticulum region spans residues 14–63 (MDFLDEPFPDVGTYEDFHTIDWLREKSRDTDRHRKITSKSKESIWEFIKS). The next 2 helical transmembrane spans lie at 68 to 105 (WSGW…VCLS) and 151 to 174 (LNYL…VRVF). Positions 180-184 (GSGIP) match the Selectivity filter part_1 motif. Ser-181 is a chloride binding site. Residues 183–190 (IPEIKTIL) constitute an intramembrane region (helical). Helical transmembrane passes span 200–218 (GKWT…VSSG) and 224–243 (EGPL…SLFS). Residues 222–226 (GKEGP) carry the Selectivity filter part_2 motif. Intramembrane regions (helical) lie at residues 255 to 267 (VLSA…VSVA) and 271 to 279 (PIGGVLFSL). The next 5 helical transmembrane spans lie at 291–309 (LWRS…RSIN), 333–358 (FPFI…AWCR), 365–385 (LGKY…IIAY), 442–462 (MWQL…TFGM), and 467–486 (GLFI…VGIG). A Selectivity filter part_3 motif is present at residues 467 to 471 (GLFIP). Phe-469 serves as a coordination point for chloride. Intramembrane regions (helical) lie at residues 514–528 (GLYA…LGGV) and 532–543 (TVSLVVIMFELT). Positions 544-547 (GGLE) form an intramembrane region, note=Loop between two helices. The chain crosses the membrane as a helical span at residues 548–566 (YIVPLMAAAVTSKWVADAF). The Cytoplasmic segment spans residues 567–760 (GKEGIYEAHI…NQDPESIMFN (194 aa)). Position 572 (Tyr-572) interacts with chloride. The region spanning 600-666 (MRPRRGEPPL…AIKNARQRQE (67 aa)) is the CBS 1 domain. Residues Ser-610 and 631-633 (YNG) each bind ATP. A required for localization in the endoplasmic reticulum region spans residues 667–696 (GIVSNSIMYFTEEPPELPANSPHPLKLRRI). The CBS 2 domain maps to 697-755 (LNLSPFTVTDHTPMETVVDIFRKLGLRQCLVTRSGRLLGIITKKDVLRHMAQMANQDPE). 738–741 (TKKD) contacts ATP.

It belongs to the chloride channel (TC 2.A.49) family. ClC-4/CLCN4 subfamily. In terms of assembly, monomer. Forms heterodimers with CLCN3. Abundant in skeletal muscle and also detectable in brain and heart.

The protein localises to the early endosome membrane. It is found in the late endosome membrane. Its subcellular location is the endoplasmic reticulum membrane. The protein resides in the lysosome membrane. It localises to the recycling endosome membrane. Strongly outwardly rectifying, electrogenic H(+)/Cl(-)exchanger which mediates the exchange of chloride ions against protons. The CLC channel family contains both chloride channels and proton-coupled anion transporters that exchange chloride or another anion for protons. The presence of conserved gating glutamate residues is typical for family members that function as antiporters. The chain is H(+)/Cl(-) exchange transporter 4 (CLCN4) from Homo sapiens (Human).